The primary structure comprises 374 residues: dTDP-3-amino-3,4,6-trideoxy-alpha-D-glucose transaminase (374 aa).

Residues Gly60, Gln160, 181–186 (SFYPTK), Tyr214, Tyr221, 229–231 (NSR), and Tyr316 each bind pyridoxal 5'-phosphate. The residue at position 186 (Lys186) is an N6-(pyridoxal phosphate)lysine.

Belongs to the degT/dnrJ/eryC1 family. Pyridoxal 5'-phosphate is required as a cofactor.

It catalyses the reaction dTDP-3-amino-3,4,6-trideoxy-alpha-D-glucose + 2-oxoglutarate = dTDP-3-dehydro-4,6-dideoxy-alpha-D-glucose + L-glutamate. The protein operates within antibiotic biosynthesis. Involved in the biosynthesis of the amino sugar dTDP-L-megosamine which is found in the macrolide antibiotic and antiparasitic megalomicin A. Catalyzes the reversible transfer of the amino group from L-glutamate to the C-3 position of dTDP-3-keto-4,6-deoxyglucose to yield dTDP-3-amino-3,4,6-trideoxyglucose. This Micromonospora megalomicea subsp. nigra protein is dTDP-3-amino-3,4,6-trideoxy-alpha-D-glucose transaminase.